The following is a 1262-amino-acid chain: Ras-specific guanine nucleotide-releasing factor 1 (1262 aa).

The PH 1 domain occupies 22–130 (DGTRKGYLSK…WVAAIARASY (109 aa)). The residue at position 71 (Ser71) is a Phosphoserine; by PLK2. The IQ domain occupies 208–233 (KKIKKVQSFLRGWLCRRKWKNIIQDY). A DH domain is found at 244-430 (KRNQVVFSML…EELSRIMHDE (187 aa)). The PH 2 domain maps to 460 to 588 (TFVRQGSLMQ…WTSDIIQCVD (129 aa)). Residues Ser581 and Ser617 each carry the phosphoserine; by PLK2 modification. Residues 635-749 (KVLQIRYASV…RRRKLSLNIP (115 aa)) enclose the N-terminal Ras-GEF domain. Residues 714-738 (DAPKSPRASRKFSSPPPLAIGTSSP) form a disordered region. Position 745 is a phosphoserine (Ser745). At Ser766 the chain carries Phosphoserine; by PLK2. Residues 800–854 (EEIDVPATIPEKPGELSASRKHSSDVLKEESEDDQNHSDEDNTEVSPVKSPPTPK) are disordered. Over residues 821–839 (HSSDVLKEESEDDQNHSDE) the composition is skewed to basic and acidic residues. The Ras-GEF domain occupies 1027 to 1259 (PALEIAEQLT…YESSLLIEPK (233 aa)).

As to quaternary structure, homooligomer and heterooligomer with RASGRF2. Interacts with USP8, thereby regulating its stability. Phosphorylated by PLK2, leading to ubiquitination and degradation by the proteasome. In terms of processing, ubiquitinated and degraded following phosphorylation by PLK2. Post-translationally, phosphorylated by SRC and LCK. Phosphorylation by LCK increases its capacity to stimulate the GDP/GTP exchange on Ras, whereas its phosphorylation by SRC seems not to have an effect on stimulation activity. As to expression, brain.

Functionally, promotes the exchange of Ras-bound GDP by GTP. The protein is Ras-specific guanine nucleotide-releasing factor 1 (Rasgrf1) of Mus musculus (Mouse).